The following is an 831-amino-acid chain: Vi polysaccharide biosynthesis protein TviD (831 aa).

It functions in the pathway glycan metabolism; Vi-antigen biosynthesis. It participates in capsule biogenesis; capsule polysaccharide biosynthesis. Its function is as follows. May be required for maturation of the Vi polysaccharide. The protein is Vi polysaccharide biosynthesis protein TviD (tviD) of Salmonella typhi.